The primary structure comprises 471 residues: V-type ATP synthase beta chain (471 aa).

It belongs to the ATPase alpha/beta chains family.

Produces ATP from ADP in the presence of a proton gradient across the membrane. The V-type beta chain is a regulatory subunit. This Deinococcus deserti (strain DSM 17065 / CIP 109153 / LMG 22923 / VCD115) protein is V-type ATP synthase beta chain.